Reading from the N-terminus, the 405-residue chain is Argininosuccinate synthase (405 aa).

ATP-binding positions include 10 to 18 (AYSGGLDTS) and Ala37. Residues Tyr88 and Ser93 each coordinate L-citrulline. An ATP-binding site is contributed by Gly118. Residues Thr120, Asn124, and Asp125 each contribute to the L-aspartate site. Position 124 (Asn124) interacts with L-citrulline. Positions 128, 177, 186, 263, and 275 each coordinate L-citrulline.

Belongs to the argininosuccinate synthase family. Type 1 subfamily. Homotetramer.

Its subcellular location is the cytoplasm. It carries out the reaction L-citrulline + L-aspartate + ATP = 2-(N(omega)-L-arginino)succinate + AMP + diphosphate + H(+). Its pathway is amino-acid biosynthesis; L-arginine biosynthesis; L-arginine from L-ornithine and carbamoyl phosphate: step 2/3. This is Argininosuccinate synthase from Acetivibrio thermocellus (strain ATCC 27405 / DSM 1237 / JCM 9322 / NBRC 103400 / NCIMB 10682 / NRRL B-4536 / VPI 7372) (Clostridium thermocellum).